The sequence spans 501 residues: MANLRLMITLITVLMITKSSNGIKIDLPKSLNLTLSTDPSIISAASHDFGNITTVTPGGVICPSSTADISRLLQYAANGKSTFQVAARGQGHSLNGQASVSGGVIVNMTCITDVVVSKDKKYADVAAGTLWVDVLKKTAEKGVSPVSWTDYLHITVGGTLSNGGIGGQVFRNGPLVSNVLELDVITGKGEMLTCSRQLNPELFYGVLGGLGQFGIITRARIVLDHAPKRAKWFRMLYSDFTTFTKDQERLISMANDIGVDYLEGQIFLSNGVVDTSFFPPSDQSKVADLVKQHGIIYVLEVAKYYDDPNLPIISKVIDTLTKTLSYLPGFISMHDVAYFDFLNRVHVEENKLRSLGLWELPHPWLNLYVPKSRILDFHNGVVKDILLKQKSASGLALLYPTNRNKWDNRMSAMIPEIDEDVIYIIGLLQSATPKDLPEVESVNEKIIRFCKDSGIKIKQYLMHYTSKEDWIEHFGSKWDDFSKRKDLFDPKKLLSPGQDIF.

Residues M1–G22 form the signal peptide. N-linked (GlcNAc...) asparagine glycosylation is found at N32 and N51. The FAD-binding PCMH-type domain occupies T53 to A226. FAD is bound by residues A87, G89, and G91. Position 92 is a pros-8alpha-FAD histidine (H92). Positions 93 and 97 each coordinate FAD. An N-linked (GlcNAc...) asparagine glycan is attached at N107. Residues D150, T155, S161, I165, I216, Y460, S495, and Q498 each contribute to the FAD site.

The protein belongs to the oxygen-dependent FAD-linked oxidoreductase family. It depends on FAD as a cofactor. In terms of tissue distribution, expressed in the shoot apex, in stipules, and occasionally in the most apical part of the inflorescence stems. Not detected in roots.

It is found in the endoplasmic reticulum. Its subcellular location is the secreted. It localises to the extracellular space. The enzyme catalyses N(6)-dimethylallyladenine + A + H2O = 3-methyl-2-butenal + adenine + AH2. Catalyzes the oxidation of cytokinins, a family of N(6)-substituted adenine derivatives that are plant hormones, where the substituent is an isopentenyl group. Modulates asymmetric cytokinin signaling in emerged lateral roots. Its activity determines cell elongation and number in emerged lateral roots and defines angular growth of lateral roots. This is Cytokinin dehydrogenase 2 (CKX2) from Arabidopsis thaliana (Mouse-ear cress).